Reading from the N-terminus, the 428-residue chain is Palmitoyltransferase ZDHHC23-B (428 aa).

Residues 1–82 (MSIMKKRSSR…RVPWISGARQ (82 aa)) are Cytoplasmic-facing. A helical membrane pass occupies residues 83 to 99 (IDVSLIPPLILLPVFLH). At 100-105 (IAALHY) the chain is on the lumenal side. A helical membrane pass occupies residues 106–125 (LLGIIMLTAMPITVLWYYFF). The Cytoplasmic portion of the chain corresponds to 126–132 (THRKKGR). A helical transmembrane segment spans residues 133–153 (TLFFLGLALFSLFYMFYLFLT). At 154-160 (QVVPRGE) the chain is on the lumenal side. Residues 161 to 181 (VTELQLAVVTAGVALTVIFLM) traverse the membrane as a helical segment. At 182–294 (LTKRGPGLVR…SCVGLANHRT (113 aa)) the chain is on the cytoplasmic side. Residues 250–300 (NWCAVCKVVRPQRAGHCRICGVCVLRLDHHCVWINSCVGLANHRTFLLTLL) form the DHHC domain. C280 functions as the S-palmitoyl cysteine intermediate in the catalytic mechanism. Residues 295–315 (FLLTLLFFLLTSIYGISLVLA) traverse the membrane as a helical segment. The Lumenal portion of the chain corresponds to 316 to 350 (SVCPDQRVLTALFYCPDVYSQYSSALCFTCAWYSS). The chain crosses the membrane as a helical span at residues 351–371 (IVTGGLLHLLLLQILNISLNV). The Cytoplasmic portion of the chain corresponds to 372–428 (TEREARLALREKSAQRRLWGLIVHTGHYSRGFWSNWTEFLTMTEDTQPAGHKTEDLV).

The protein belongs to the DHHC palmitoyltransferase family.

It localises to the golgi apparatus membrane. The protein localises to the golgi apparatus. It is found in the trans-Golgi network membrane. It catalyses the reaction L-cysteinyl-[protein] + hexadecanoyl-CoA = S-hexadecanoyl-L-cysteinyl-[protein] + CoA. Its function is as follows. Palmitoyltransferase that could catalyze the addition of palmitate onto various protein substrates and be involved in a variety of cellular processes. This is Palmitoyltransferase ZDHHC23-B from Danio rerio (Zebrafish).